Here is a 149-residue protein sequence, read N- to C-terminus: Ribosome-binding factor A (149 aa).

The segment at 124 to 149 is disordered; that stretch reads AKLREGAVPAGDADPYKTSSKSESEE.

It belongs to the RbfA family. As to quaternary structure, monomer. Binds 30S ribosomal subunits, but not 50S ribosomal subunits or 70S ribosomes.

The protein localises to the cytoplasm. Its function is as follows. One of several proteins that assist in the late maturation steps of the functional core of the 30S ribosomal subunit. Associates with free 30S ribosomal subunits (but not with 30S subunits that are part of 70S ribosomes or polysomes). Required for efficient processing of 16S rRNA. May interact with the 5'-terminal helix region of 16S rRNA. The sequence is that of Ribosome-binding factor A from Corynebacterium glutamicum (strain R).